Here is a 468-residue protein sequence, read N- to C-terminus: MNAATKLPGDVGPIHFVGIGGIGMSGIAEVLLNHGYRVQGSDLKPTRITRRLEELGARVFVGQRPENIEDAEVIVISSAIKPGNAELDAARARGLPIVRRAEMLGELMRLKSNIAVAGTHGKTTTTTMVATLLDAGEFDPTVVNGGIIHAYGSNARKGEGEWMVVEADESDGTFNRLPATIAIVTNIDPEHMEHWGDFDTLRQGFLDFVSNIPFYGVAVCCTDHPEVQALVGKITDRRVITYGFNAQADVRAVNLRYAGGVAYFDVALQAEGTVIEGCSLPMPGDHNVSNALSAIAVARHLGMKAEVIKTALAAFGGVNRRFTRVGEIDGVTIIDDYGHHPVEIAAVLKAARQATEGRVIAVHQPHRYSRLSSLFDDFCACFNDADVVGIAEVYAAGEDPIPGAGRDDLVAGLIRHGHRHARAVVGEDDLERLVREQTRPGDMVVCLGAGTISAWANGLPARLQKGAA.

118–124 contacts ATP; the sequence is GTHGKTT.

Belongs to the MurCDEF family.

It localises to the cytoplasm. It catalyses the reaction UDP-N-acetyl-alpha-D-muramate + L-alanine + ATP = UDP-N-acetyl-alpha-D-muramoyl-L-alanine + ADP + phosphate + H(+). The protein operates within cell wall biogenesis; peptidoglycan biosynthesis. Cell wall formation. The sequence is that of UDP-N-acetylmuramate--L-alanine ligase from Roseobacter denitrificans (strain ATCC 33942 / OCh 114) (Erythrobacter sp. (strain OCh 114)).